A 92-amino-acid chain; its full sequence is Small ribosomal subunit protein uS19 (92 aa).

This sequence belongs to the universal ribosomal protein uS19 family.

Protein S19 forms a complex with S13 that binds strongly to the 16S ribosomal RNA. The sequence is that of Small ribosomal subunit protein uS19 from Francisella philomiragia subsp. philomiragia (strain ATCC 25017 / CCUG 19701 / FSC 153 / O#319-036).